Reading from the N-terminus, the 127-residue chain is Large ribosomal subunit protein bL17 (127 aa).

The protein belongs to the bacterial ribosomal protein bL17 family. In terms of assembly, part of the 50S ribosomal subunit. Contacts protein L32.

This is Large ribosomal subunit protein bL17 from Actinobacillus pleuropneumoniae serotype 7 (strain AP76).